Here is a 355-residue protein sequence, read N- to C-terminus: Beta-ketoacyl-[acyl-carrier-protein] synthase III (355 aa).

Active-site residues include Cys-122 and His-280. Positions 281-285 (QANMR) are ACP-binding. Asn-311 is an active-site residue.

This sequence belongs to the thiolase-like superfamily. FabH family. As to quaternary structure, homodimer.

It is found in the cytoplasm. It carries out the reaction malonyl-[ACP] + acetyl-CoA + H(+) = 3-oxobutanoyl-[ACP] + CO2 + CoA. It functions in the pathway lipid metabolism; fatty acid biosynthesis. Catalyzes the condensation reaction of fatty acid synthesis by the addition to an acyl acceptor of two carbons from malonyl-ACP. Catalyzes the first condensation reaction which initiates fatty acid synthesis and may therefore play a role in governing the total rate of fatty acid production. Possesses both acetoacetyl-ACP synthase and acetyl transacylase activities. Its substrate specificity determines the biosynthesis of branched-chain and/or straight-chain of fatty acids. The polypeptide is Beta-ketoacyl-[acyl-carrier-protein] synthase III (Kocuria rhizophila (strain ATCC 9341 / DSM 348 / NBRC 103217 / DC2201)).